Here is a 195-residue protein sequence, read N- to C-terminus: HTH-type transcriptional regulator BetI (195 aa).

Residues 8 to 68 (SIRRRQLIDA…ATMRDITSQL (61 aa)) form the HTH tetR-type domain. The segment at residues 31–50 (TIAQIARRAGVSTGIISHYF) is a DNA-binding region (H-T-H motif).

Its pathway is amine and polyamine biosynthesis; betaine biosynthesis via choline pathway [regulation]. Its function is as follows. Repressor involved in the biosynthesis of the osmoprotectant glycine betaine. It represses transcription of the choline transporter BetT and the genes of BetAB involved in the synthesis of glycine betaine. The polypeptide is HTH-type transcriptional regulator BetI (Escherichia coli O127:H6 (strain E2348/69 / EPEC)).